A 529-amino-acid polypeptide reads, in one-letter code: HTH-type transcriptional activator Btr (529 aa).

Positions 182–201 (LAQLSQMAGISAKHYSESFK) form a DNA-binding region, H-T-H motif. The 261-residue stretch at 268-528 (KIAAYGRGTM…QTVSLLSGDC (261 aa)) folds into the Fe/B12 periplasmic-binding domain.

Binds with high affinity to both apo-bacillibactin and iron-bacillibactin.

It is found in the cytoplasm. Functionally, in iron-limited conditions, activates expression of the feuABCybbA operon, which encodes the bacillibactin uptake system. Acts by binding directly to a conserved direct repeat element upstream of the feuA promoter. Activity is increased in the presence of bacillibactin. This is HTH-type transcriptional activator Btr (btr) from Bacillus subtilis (strain 168).